Consider the following 193-residue polypeptide: Phosphoheptose isomerase (193 aa).

An SIS domain is found at 37-193 (LADSFKAGGK…QLIEKEMVKA (157 aa)). 52-54 (NGG) is a substrate binding site. Zn(2+) is bound by residues H61 and E65. Substrate is bound by residues E65, 93–94 (ND), 119–121 (STS), S124, and Q172. 2 residues coordinate Zn(2+): Q172 and H180.

This sequence belongs to the SIS family. GmhA subfamily. Homotetramer. Requires Zn(2+) as cofactor.

The protein resides in the cytoplasm. It carries out the reaction 2 D-sedoheptulose 7-phosphate = D-glycero-alpha-D-manno-heptose 7-phosphate + D-glycero-beta-D-manno-heptose 7-phosphate. It functions in the pathway carbohydrate biosynthesis; D-glycero-D-manno-heptose 7-phosphate biosynthesis; D-glycero-alpha-D-manno-heptose 7-phosphate and D-glycero-beta-D-manno-heptose 7-phosphate from sedoheptulose 7-phosphate: step 1/1. In terms of biological role, catalyzes the isomerization of sedoheptulose 7-phosphate in D-glycero-D-manno-heptose 7-phosphate. This Serratia proteamaculans (strain 568) protein is Phosphoheptose isomerase.